The primary structure comprises 457 residues: F-box/LRR-repeat protein At3g62440 (457 aa).

One can recognise an F-box domain in the interval Met-1–Ser-49. LRR repeat units follow at residues Gly-53–Trp-79, Leu-147–His-174, Phe-177–Gly-202, Trp-229–Asp-254, Trp-283–Thr-310, and Leu-337–Gly-362.

This is F-box/LRR-repeat protein At3g62440 from Arabidopsis thaliana (Mouse-ear cress).